We begin with the raw amino-acid sequence, 704 residues long: Translin-associated factor X-interacting protein 1 (704 aa).

A disordered region spans residues 1–37 (MANLQERKSFSKPRISIQASGGTPEAKGIEKRKLSQK). Coiled coils occupy residues 190–230 (EISV…AEEY) and 304–342 (RRDLEMQEKTNMELQEQLESLKADYEEVQKEHELLLQLH).

As to quaternary structure, interacts with TSNAX. In terms of tissue distribution, specifically expressed in testes. Predominantly detected in the post-meiotic stages of germ cells.

It is found in the cytoplasm. The protein localises to the perinuclear region. Functionally, possible role in spermatogenesis. In Mus musculus (Mouse), this protein is Translin-associated factor X-interacting protein 1.